We begin with the raw amino-acid sequence, 520 residues long: Cytosol aminopeptidase (520 aa).

Zn(2+)-binding residues include L200, M201, K280, and D285. Substrate is bound by residues K280, D285, S290, and K292. D285 contributes to the Mg(2+) binding site. The active site involves K292. 4 residues coordinate Zn(2+): R301, D303, D362, and E364. Substrate-binding residues include D303 and D362. 2 residues coordinate Mg(2+): D362 and E364. Residue R366 is part of the active site.

Belongs to the peptidase M17 family. In terms of assembly, homohexamer. Requires Zn(2+) as cofactor. The cofactor is Mn(2+).

The protein resides in the cytoplasm. It catalyses the reaction Release of an N-terminal amino acid, Xaa-|-Yaa-, in which Xaa is preferably Leu, but may be other amino acids including Pro although not Arg or Lys, and Yaa may be Pro. Amino acid amides and methyl esters are also readily hydrolyzed, but rates on arylamides are exceedingly low.. The enzyme catalyses an S-substituted L-cysteinylglycine + H2O = an S-substituted L-cysteine + glycine. The catalysed reaction is L-cysteinylglycine + H2O = L-cysteine + glycine. It carries out the reaction S-benzyl-L-cysteinylglycine + H2O = S-benzyl-L-cysteine + glycine. It catalyses the reaction Release of N-terminal proline from a peptide.. Its function is as follows. Cytosolic metallopeptidase that catalyzes the removal of unsubstituted N-terminal hydrophobic amino acids from various peptides. The presence of Zn(2+) ions is essential for the peptidase activity, and the association with other cofactors can modulate the substrate spectificity of the enzyme. For instance, in the presence of Mn(2+), it displays a specific Cys-Gly hydrolyzing activity of Cys-Gly-S-conjugates. Involved in the metabolism of glutathione and in the degradation of glutathione S-conjugates, which may play a role in the control of the cell redox status. This Xenopus tropicalis (Western clawed frog) protein is Cytosol aminopeptidase (lap3).